Here is a 441-residue protein sequence, read N- to C-terminus: Enolase (441 aa).

Q164 serves as a coordination point for (2R)-2-phosphoglycerate. Residue E206 is the Proton donor of the active site. Positions 243, 289, and 316 each coordinate Mg(2+). (2R)-2-phosphoglycerate-binding residues include K341, R370, S371, and K392. The Proton acceptor role is filled by K341.

The protein belongs to the enolase family. Mg(2+) is required as a cofactor.

It localises to the cytoplasm. The protein resides in the secreted. The protein localises to the cell surface. The enzyme catalyses (2R)-2-phosphoglycerate = phosphoenolpyruvate + H2O. It functions in the pathway carbohydrate degradation; glycolysis; pyruvate from D-glyceraldehyde 3-phosphate: step 4/5. Its function is as follows. Catalyzes the reversible conversion of 2-phosphoglycerate (2-PG) into phosphoenolpyruvate (PEP). It is essential for the degradation of carbohydrates via glycolysis. The polypeptide is Enolase (Leuconostoc mesenteroides subsp. mesenteroides (strain ATCC 8293 / DSM 20343 / BCRC 11652 / CCM 1803 / JCM 6124 / NCDO 523 / NBRC 100496 / NCIMB 8023 / NCTC 12954 / NRRL B-1118 / 37Y)).